Here is a 1060-residue protein sequence, read N- to C-terminus: Carbamoyl phosphate synthase large chain (1060 aa).

Residues 1 to 401 are carboxyphosphate synthetic domain; the sequence is MPKRTDIKKI…SLLKAVRSLE (401 aa). Residues Arg129, Arg169, Gly175, Gly176, Lys208, Ile210, Glu215, Gly241, Ile242, His243, Gln284, and Glu298 each contribute to the ATP site. The region spanning 133-327 is the ATP-grasp 1 domain; that stretch reads KQLMEELEQP…IAKLAAKIAV (195 aa). Positions 284, 298, and 300 each coordinate Mg(2+). Mn(2+) contacts are provided by Gln284, Glu298, and Asn300. The segment at 402-546 is oligomerization domain; sequence IGAYHNELAE…YSTYEVENES (145 aa). The interval 547–929 is carbamoyl phosphate synthetic domain; that stretch reads NVSKKPSVLV…ALYKAFEASG (383 aa). Residues 671–861 enclose the ATP-grasp 2 domain; sequence EQALQELAIP…MAQVATKAIL (191 aa). Arg707, Ser746, Leu748, Glu752, Gly777, Val778, His779, Ser780, Gln820, and Glu832 together coordinate ATP. Residues Gln820, Glu832, and Asn834 each coordinate Mg(2+). Mn(2+)-binding residues include Gln820, Glu832, and Asn834. An MGS-like domain is found at 930 to 1060; it reads LHLPSYGAVL…ESRAFTTEAI (131 aa). Positions 930–1060 are allosteric domain; the sequence is LHLPSYGAVL…ESRAFTTEAI (131 aa).

It belongs to the CarB family. As to quaternary structure, composed of two chains; the small (or glutamine) chain promotes the hydrolysis of glutamine to ammonia, which is used by the large (or ammonia) chain to synthesize carbamoyl phosphate. Tetramer of heterodimers (alpha,beta)4. It depends on Mg(2+) as a cofactor. The cofactor is Mn(2+).

The enzyme catalyses hydrogencarbonate + L-glutamine + 2 ATP + H2O = carbamoyl phosphate + L-glutamate + 2 ADP + phosphate + 2 H(+). The catalysed reaction is hydrogencarbonate + NH4(+) + 2 ATP = carbamoyl phosphate + 2 ADP + phosphate + 2 H(+). It functions in the pathway amino-acid biosynthesis; L-arginine biosynthesis; carbamoyl phosphate from bicarbonate: step 1/1. It participates in pyrimidine metabolism; UMP biosynthesis via de novo pathway; (S)-dihydroorotate from bicarbonate: step 1/3. In terms of biological role, large subunit of the glutamine-dependent carbamoyl phosphate synthetase (CPSase). CPSase catalyzes the formation of carbamoyl phosphate from the ammonia moiety of glutamine, carbonate, and phosphate donated by ATP, constituting the first step of 2 biosynthetic pathways, one leading to arginine and/or urea and the other to pyrimidine nucleotides. The large subunit (synthetase) binds the substrates ammonia (free or transferred from glutamine from the small subunit), hydrogencarbonate and ATP and carries out an ATP-coupled ligase reaction, activating hydrogencarbonate by forming carboxy phosphate which reacts with ammonia to form carbamoyl phosphate. The sequence is that of Carbamoyl phosphate synthase large chain from Enterococcus faecalis (strain ATCC 700802 / V583).